A 110-amino-acid chain; its full sequence is Integration host factor subunit alpha (110 aa).

The protein belongs to the bacterial histone-like protein family. Heterodimer of an alpha and a beta chain.

Functionally, this protein is one of the two subunits of integration host factor, a specific DNA-binding protein that functions in genetic recombination as well as in transcriptional and translational control. This Methylococcus capsulatus (strain ATCC 33009 / NCIMB 11132 / Bath) protein is Integration host factor subunit alpha.